The chain runs to 551 residues: Calcium-dependent protein kinase 13 (551 aa).

Glycine 2 is lipidated: N-myristoyl glycine. Positions serine 15–glycine 78 are disordered. A Protein kinase domain is found at tyrosine 88–isoleucine 346. ATP-binding positions include leucine 94–threonine 102 and lysine 117. The Proton acceptor role is filled by aspartate 212. The interval alanine 352–isoleucine 382 is autoinhibitory domain. EF-hand domains follow at residues glutamate 389–threonine 424, leucine 425–leucine 460, glutamate 461–proline 496, and aspartate 497–glycine 530. The Ca(2+) site is built by aspartate 402, aspartate 404, serine 406, glutamate 413, aspartate 438, aspartate 440, serine 442, threonine 444, glutamate 449, aspartate 474, aspartate 476, serine 478, tyrosine 480, glutamate 485, aspartate 508, aspartate 510, aspartate 512, arginine 514, and glutamate 519.

It belongs to the protein kinase superfamily. Ser/Thr protein kinase family. CDPK subfamily. In terms of tissue distribution, expressed in vascular tissues of crowns and roots, vascular bundles and central cylinder. Expressed in roots, leaf blades, spikelets and developing seeds.

Its subcellular location is the membrane. It catalyses the reaction L-seryl-[protein] + ATP = O-phospho-L-seryl-[protein] + ADP + H(+). It carries out the reaction L-threonyl-[protein] + ATP = O-phospho-L-threonyl-[protein] + ADP + H(+). Its activity is regulated as follows. Activated by calcium. Autophosphorylation may play an important role in the regulation of the kinase activity. Functionally, may play a role in signal transduction pathways that involve calcium as a second messenger. May function in signal transduction pathways that positively regulate responses to cold, salt and drought stresses. This Oryza sativa subsp. japonica (Rice) protein is Calcium-dependent protein kinase 13.